A 102-amino-acid chain; its full sequence is NADH-quinone oxidoreductase subunit K 1 (102 aa).

3 consecutive transmembrane segments (helical) span residues 5-25, 31-51, and 65-85; these read ISHY…GIFL, IIIL…MVAF, and LFIL…LVVF.

The protein belongs to the complex I subunit 4L family. In terms of assembly, NDH-1 is composed of 14 different subunits. Subunits NuoA, H, J, K, L, M, N constitute the membrane sector of the complex.

It localises to the cell inner membrane. The enzyme catalyses a quinone + NADH + 5 H(+)(in) = a quinol + NAD(+) + 4 H(+)(out). Functionally, NDH-1 shuttles electrons from NADH, via FMN and iron-sulfur (Fe-S) centers, to quinones in the respiratory chain. The immediate electron acceptor for the enzyme in this species is believed to be ubiquinone. Couples the redox reaction to proton translocation (for every two electrons transferred, four hydrogen ions are translocated across the cytoplasmic membrane), and thus conserves the redox energy in a proton gradient. The sequence is that of NADH-quinone oxidoreductase subunit K 1 from Rhizobium meliloti (strain 1021) (Ensifer meliloti).